Consider the following 599-residue polypeptide: Sulfite reductase [NADPH] flavoprotein alpha-component (599 aa).

Residues 64–202 enclose the Flavodoxin-like domain; that stretch reads ITLISASQTG…VAAQWRARIV (139 aa). FMN contacts are provided by residues 70–75, 117–120, and 153–162; these read SQTGNA, STQG, and LGDTSYEFFC. An FAD-binding FR-type domain is found at 234-448; that stretch reads EAPLRASLSV…IEHNDNFRLP (215 aa). FAD contacts are provided by residues Thr322, Ala356, 386 to 389, 404 to 406, Tyr410, and 419 to 422; these read RLYS, TVG, and GGAS. Residues 519–520, 525–529, and Asp561 contribute to the NADP(+) site; these read SR and KIYVQ. Tyr599 is an FAD binding site.

The protein belongs to the NADPH-dependent sulphite reductase flavoprotein subunit CysJ family. In the N-terminal section; belongs to the flavodoxin family. This sequence in the C-terminal section; belongs to the flavoprotein pyridine nucleotide cytochrome reductase family. Alpha(8)-beta(8). The alpha component is a flavoprotein, the beta component is a hemoprotein. The cofactor is FAD. It depends on FMN as a cofactor.

It catalyses the reaction hydrogen sulfide + 3 NADP(+) + 3 H2O = sulfite + 3 NADPH + 4 H(+). It functions in the pathway sulfur metabolism; hydrogen sulfide biosynthesis; hydrogen sulfide from sulfite (NADPH route): step 1/1. Component of the sulfite reductase complex that catalyzes the 6-electron reduction of sulfite to sulfide. This is one of several activities required for the biosynthesis of L-cysteine from sulfate. The flavoprotein component catalyzes the electron flow from NADPH -&gt; FAD -&gt; FMN to the hemoprotein component. This Salmonella arizonae (strain ATCC BAA-731 / CDC346-86 / RSK2980) protein is Sulfite reductase [NADPH] flavoprotein alpha-component.